Consider the following 79-residue polypeptide: Small ribosomal subunit protein eS17 (79 aa).

The protein belongs to the eukaryotic ribosomal protein eS17 family.

The sequence is that of Small ribosomal subunit protein eS17 from Saccharolobus islandicus (strain Y.N.15.51 / Yellowstone #2) (Sulfolobus islandicus).